Consider the following 246-residue polypeptide: Flavin-dependent thymidylate synthase (246 aa).

The 225-residue stretch at 17–241 folds into the ThyX domain; that stretch reads VTVELVKHSA…PLTYAAFNTN (225 aa). Residues Ser-69, 92–94, and Glu-101 contribute to the FAD site; that span reads RHR. DUMP contacts are provided by residues 89-92, 101-105, and Arg-173; these read EFMR and EESGR. Residues 92-103 carry the ThyX motif motif; that stretch reads RHRVGWSYNEES. FAD is bound by residues 189–191 and His-195; that span reads NAR. Residue Arg-200 coordinates dUMP. Arg-200 acts as the Involved in ionization of N3 of dUMP, leading to its activation in catalysis.

It belongs to the thymidylate synthase ThyX family. As to quaternary structure, homotetramer. It depends on FAD as a cofactor.

It catalyses the reaction dUMP + (6R)-5,10-methylene-5,6,7,8-tetrahydrofolate + NADPH + H(+) = dTMP + (6S)-5,6,7,8-tetrahydrofolate + NADP(+). It functions in the pathway pyrimidine metabolism; dTTP biosynthesis. Functionally, catalyzes the reductive methylation of 2'-deoxyuridine-5'-monophosphate (dUMP) to 2'-deoxythymidine-5'-monophosphate (dTMP) while utilizing 5,10-methylenetetrahydrofolate (mTHF) as the methyl donor, and NADPH and FADH(2) as the reductant. In Streptomyces avermitilis (strain ATCC 31267 / DSM 46492 / JCM 5070 / NBRC 14893 / NCIMB 12804 / NRRL 8165 / MA-4680), this protein is Flavin-dependent thymidylate synthase.